The primary structure comprises 37 residues: Large ribosomal subunit protein bL36c (37 aa).

Belongs to the bacterial ribosomal protein bL36 family.

The protein localises to the plastid. It localises to the chloroplast. In Liriodendron tulipifera (Tuliptree), this protein is Large ribosomal subunit protein bL36c.